The primary structure comprises 157 residues: Cell cycle regulator of non-homologous end joining (157 aa).

An N-acetylmethionine modification is found at methionine 1. A KBM motif is present at residues 1-21 (METLQSETKTRVLPSWLTAQV). Residues 77 to 147 (KACEQPALAG…SPEEEEEEDV (71 aa)) form a disordered region. The segment covering 98–107 (VSPHTSSGSS) has biased composition (low complexity). A compositionally biased stretch (polar residues) spans 123–136 (SPSQRPGGSSSACS). Positions 147 to 157 (VLKYVREIFFS) match the XLM motif.

Interacts (via KBM motif) with XRCC5/Ku80 and XRCC6/Ku70 heterodimer. Interacts (via XLF motif) with TRIM28/KAP1, ATM, MRE11, NBN and RAD50. Interacts with splicing factor SF3B1. Interacts with ERCC6L2; this interaction is DNA independent. In terms of assembly, does not interact with XRCC5/Ku80 and XRCC6/Ku70 heterodimer. As to quaternary structure, interacts (via KBM motif) with XRCC5/Ku80 and XRCC6/Ku70 heterodimer.

Its subcellular location is the cytoplasm. It localises to the nucleus. The protein resides in the chromosome. Functionally, cell-cycle-specific regulator of classical non-homologous end joining (NHEJ) of DNA double-strand break (DSB) repair, which can act both as an activator or inhibitor of NHEJ, depending on the cell cycle phase. Acts as a regulator of DNA repair pathway choice by specifically inhibiting classical NHEJ during the S and G2 phases, thereby promoting error-free repair by homologous recombination during cell cycle phases when sister chromatids are present. Preferentially protects single-stranded overhangs at break sites by inhibiting classical NHEJ, thereby creating a local environment that favors homologous recombination. Acts via interaction with XRCC5/Ku80 and XRCC6/Ku70. In contrast, acts as an activator of NHEJ during G1 phase of the cell cycle: promotes classical NHEJ in G1 phase cells via multivalent interactions that increase the affinity of DNA damage response proteins for DSB-associated chromatin. Also involved in immunoglobulin V(D)J recombination. May also act as an indirect regulator of proteasome. The sequence is that of Cell cycle regulator of non-homologous end joining from Homo sapiens (Human).